The primary structure comprises 78 residues: Small acidic protein 2 (78 aa).

Expressed in siliques and anthers.

In terms of biological role, mediates responses to the synthetic auxin 2,4-dichlorophenoxyacetic acid (2,4-D). Not involved in the response to indole-3-acetic acid (IAA). May interact with RUB modification-related components and may regulate the culling-ring ubiquitin E3 ligase complex (CRL) activity. The chain is Small acidic protein 2 (SMAP2) from Arabidopsis thaliana (Mouse-ear cress).